We begin with the raw amino-acid sequence, 215 residues long: Ependymin-1 (215 aa).

Positions 1–20 (MHTVKLLCVVFSCLCAVAWA) are cleaved as a signal peptide. Residues Asn71 and Asn94 are each glycosylated (N-linked (GlcNAc...) asparagine).

This sequence belongs to the ependymin family. In terms of assembly, forms disulfide-linked dimers. In terms of processing, different glycosylation variants are known as EPD-beta and EPD-gamma. Post-translationally, binds calcium through the terminal sialic acids. As to expression, EPDs are synthesized in the meninx and secreted in the cerebrospinal fluid.

The protein localises to the secreted. Functionally, may play a role in neural plasticity. May be involved during axon regeneration. The polypeptide is Ependymin-1 (epd1) (Carassius auratus (Goldfish)).